Here is a 346-residue protein sequence, read N- to C-terminus: Peroxidase 38 (346 aa).

The N-terminal stretch at Met-1 to Ala-22 is a signal peptide. The residue at position 23 (Gln-23) is a Pyrrolidone carboxylic acid. Disulfide bonds link Cys-33–Cys-113, Cys-66–Cys-71, Cys-119–Cys-323, and Cys-199–Cys-231. His-64 functions as the Proton acceptor in the catalytic mechanism. The Ca(2+) site is built by Asp-65, Val-68, Gly-70, Asp-72, and Ser-74. Asn-79 carries N-linked (GlcNAc...) asparagine glycosylation. Pro-161 is a substrate binding site. His-192 contacts heme b. Residue Thr-193 participates in Ca(2+) binding. N-linked (GlcNAc...) asparagine glycosylation occurs at Asn-236. Residues Asp-244, Thr-247, and Asp-252 each contribute to the Ca(2+) site.

The protein belongs to the peroxidase family. Classical plant (class III) peroxidase subfamily. Heme b is required as a cofactor. The cofactor is Ca(2+).

The protein resides in the secreted. The protein localises to the vacuole. The catalysed reaction is 2 a phenolic donor + H2O2 = 2 a phenolic radical donor + 2 H2O. Removal of H(2)O(2), oxidation of toxic reductants, biosynthesis and degradation of lignin, suberization, auxin catabolism, response to environmental stresses such as wounding, pathogen attack and oxidative stress. These functions might be dependent on each isozyme/isoform in each plant tissue. The protein is Peroxidase 38 (PER38) of Arabidopsis thaliana (Mouse-ear cress).